Consider the following 307-residue polypeptide: Malate dehydrogenase (307 aa).

Residues 8–13 (GAGNVG) and Asp-32 contribute to the NAD(+) site. Residues Arg-81 and Arg-87 each contribute to the substrate site. NAD(+) contacts are provided by residues Asn-94 and 117–119 (VSN). 2 residues coordinate substrate: Asn-119 and Arg-150. The Proton acceptor role is filled by His-174.

It belongs to the LDH/MDH superfamily. MDH type 3 family.

It catalyses the reaction (S)-malate + NAD(+) = oxaloacetate + NADH + H(+). Functionally, catalyzes the reversible oxidation of malate to oxaloacetate. The protein is Malate dehydrogenase of Dehalococcoides mccartyi (strain ATCC BAA-2266 / KCTC 15142 / 195) (Dehalococcoides ethenogenes (strain 195)).